The chain runs to 303 residues: Glycosyltransferase AglJ (303 aa).

2 helical membrane passes run 230–250 (FYFG…ALYV) and 263–283 (VIAV…MFGV).

This sequence belongs to the glycosyltransferase 2 family.

Its subcellular location is the cell membrane. It functions in the pathway cell surface structure biogenesis; S-layer biogenesis. Its function is as follows. Involved in the assembly of a N-linked pentasaccharide that decorates the S-layer glycoprotein and flagellins. Adds the first hexose subunit of the pentasaccharide to the dolichol phosphate carrier. The chain is Glycosyltransferase AglJ (aglJ) from Haloferax volcanii (strain ATCC 29605 / DSM 3757 / JCM 8879 / NBRC 14742 / NCIMB 2012 / VKM B-1768 / DS2) (Halobacterium volcanii).